The primary structure comprises 352 residues: C-C chemokine receptor type 5 (352 aa).

At 1–30 the chain is on the extracellular side; it reads MDYQVSSPTYDIDYYTSEPCQKINVKQIAA. Tyr-3 carries the post-translational modification Sulfotyrosine. Residues Ser-6 and Ser-7 are each glycosylated (O-linked (GalNAc...) serine). Sulfotyrosine occurs at positions 10, 14, and 15. Cystine bridges form between Cys-20-Cys-269 and Cys-101-Cys-178. Residues 31 to 58 form a helical membrane-spanning segment; sequence RLLPPLYSLVFIFGFVGNMLVILILINC. Residues 59-68 lie on the Cytoplasmic side of the membrane; the sequence is KRLKSMTDIY. Residues 69–89 form a helical membrane-spanning segment; it reads LLNLAISDLFFLLTVPFWAHY. Residues 90 to 102 are Extracellular-facing; it reads AAAQWDFGNTMCQ. The helical transmembrane segment at 103 to 124 threads the bilayer; the sequence is LLTGLYFIGFFSGIFFIILLTI. Over 125-141 the chain is Cytoplasmic; sequence DRYLAIVHAVFALKART. Residues 142–166 form a helical membrane-spanning segment; that stretch reads VTFGVVTSVITWVVAVFASLPGIIF. Over 167–198 the chain is Extracellular; that stretch reads TRSQKEGLHYTCSSHFPYSQYQFWKNFQTLKI. Residues 199–218 traverse the membrane as a helical segment; sequence VILGLVLPLLVMVICYSGIL. At 219 to 235 the chain is on the cytoplasmic side; it reads KTLLRCRNEKKRHRAVR. The helical transmembrane segment at 236-260 threads the bilayer; the sequence is LIFTIMIVYFLFWAPYNIVLLLNTF. Residues 261-277 are Extracellular-facing; that stretch reads QEFFGLNNCSSSNRLDQ. Residues 278–301 form a helical membrane-spanning segment; the sequence is AMQVTETLGMTHCCINPIIYAFVG. At 302 to 352 the chain is on the cytoplasmic side; it reads EKFRNYLLVFFQKHIAKRFCKCCSIFQQEAPERASSVYTRSTGEQEISVGL. 3 S-palmitoyl cysteine lipidation sites follow: Cys-321, Cys-323, and Cys-324. Phosphoserine; by BARK1 occurs at positions 336, 337, 342, and 349.

It belongs to the G-protein coupled receptor 1 family. Interacts with PRAF2. Efficient ligand binding to CCL3/MIP-1alpha and CCL4/MIP-1beta requires sulfation, O-glycosylation and sialic acid modifications. Glycosylation on Ser-6 is required for efficient binding of CCL4. Interacts with GRK2. Interacts with ARRB1 and ARRB2. Interacts with CNIH4. Interacts with S100A4; this interaction stimulates T-lymphocyte chemotaxis. Post-translationally, sulfated on at least 2 of the N-terminal tyrosines. Sulfation is required for efficient binding of the chemokines, CCL3 and CCL4. In terms of processing, palmitoylation in the C-terminal is important for cell surface expression. Phosphorylation on serine residues in the C-terminal is stimulated by binding CC chemokines especially by APO-RANTES. Post-translationally, O-glycosylated, but not N-glycosylated. Ser-6 appears to be the major site even if Ser-7 may be also O-glycosylated. Also sialylated glycans present which contribute to chemokine binding. Thr-16 and Ser-17 may also be glycosylated and, if so, with small moieties such as a T-antigen.

It localises to the cell membrane. In terms of biological role, receptor for a number of inflammatory CC-chemokines including CCL3/MIP-1-alpha, CCL4/MIP-1-beta and RANTES and subsequently transduces a signal by increasing the intracellular calcium ion level. May play a role in the control of granulocytic lineage proliferation or differentiation. Participates in T-lymphocyte migration to the infection site by acting as a chemotactic receptor. The chain is C-C chemokine receptor type 5 (CCR5) from Pongo abelii (Sumatran orangutan).